Consider the following 498-residue polypeptide: ATP synthase subunit beta, chloroplastic (498 aa).

Residue 172 to 179 (GGAGVGKT) participates in ATP binding.

Belongs to the ATPase alpha/beta chains family. In terms of assembly, F-type ATPases have 2 components, CF(1) - the catalytic core - and CF(0) - the membrane proton channel. CF(1) has five subunits: alpha(3), beta(3), gamma(1), delta(1), epsilon(1). CF(0) has four main subunits: a(1), b(1), b'(1) and c(9-12).

Its subcellular location is the plastid. It is found in the chloroplast thylakoid membrane. The catalysed reaction is ATP + H2O + 4 H(+)(in) = ADP + phosphate + 5 H(+)(out). Functionally, produces ATP from ADP in the presence of a proton gradient across the membrane. The catalytic sites are hosted primarily by the beta subunits. This Morus indica (Mulberry) protein is ATP synthase subunit beta, chloroplastic.